Consider the following 197-residue polypeptide: LexA repressor (197 aa).

The segment at residues Val28 to Ile47 is a DNA-binding region (H-T-H motif). Active-site for autocatalytic cleavage activity residues include Ser119 and Lys156.

It belongs to the peptidase S24 family. As to quaternary structure, homodimer.

The enzyme catalyses Hydrolysis of Ala-|-Gly bond in repressor LexA.. In terms of biological role, represses a number of genes involved in the response to DNA damage (SOS response), including recA and lexA. In the presence of single-stranded DNA, RecA interacts with LexA causing an autocatalytic cleavage which disrupts the DNA-binding part of LexA, leading to derepression of the SOS regulon and eventually DNA repair. This chain is LexA repressor, found in Thermotoga petrophila (strain ATCC BAA-488 / DSM 13995 / JCM 10881 / RKU-1).